Consider the following 556-residue polypeptide: M-phase inducer phosphatase (556 aa).

2 disordered regions span residues 165–186 (STDG…QERR) and 257–297 (TSGL…RPRK). The segment covering 287–297 (KSAHPNMRPRK) has biased composition (basic residues). The region spanning 371–474 (MFDNIMIIDC…FFAEHRSLCY (104 aa)) is the Rhodanese domain. Residue Cys-421 is part of the active site. The segment covering 505–516 (RAQTFAFGQQSP) has biased composition (polar residues). The tract at residues 505-556 (RAQTFAFGQQSPEMEDSPTGRCRNNPGDRKLLASPFNDSPGSRFPGRRMLSY) is disordered.

It belongs to the MPI phosphatase family.

It carries out the reaction O-phospho-L-tyrosyl-[protein] + H2O = L-tyrosyl-[protein] + phosphate. Functionally, this protein functions as a dosage-dependent inducer in mitotic control. It is a tyrosine protein phosphatase required for progression of the cell cycle. It may directly dephosphorylate p34(cdc2) and activate the p34(cdc2) kinase activity. This Emericella nidulans (strain FGSC A4 / ATCC 38163 / CBS 112.46 / NRRL 194 / M139) (Aspergillus nidulans) protein is M-phase inducer phosphatase (nimT).